The sequence spans 56 residues: TauPI-stichotoxin-Hcr2c (56 aa).

The BPTI/Kunitz inhibitor domain maps to 4–54; it reads CLEPKVVGPCTAYFRRFYFDSETGKCTPFIYGGCEGNGNNFETLRACRAIC. Intrachain disulfides connect Cys-4–Cys-54, Cys-13–Cys-37, and Cys-29–Cys-50.

It belongs to the venom Kunitz-type family. Sea anemone type 2 potassium channel toxin subfamily.

The protein resides in the secreted. It localises to the nematocyst. In terms of biological role, this protease inhibitor shows two different activities, it inhibits both the capsaicin receptor TRPV1 and serine proteases. It partially (max 50%) and reversibly inhibits mammalian TRPV1, a non-selective cation channel expressed by sensory neurons of the pain pathway). The second activity is a weak inhibition of trypsin and chymotrypsin activity (Ki=0.9 uM and Ki=4.5 uM, respectively). In vivo, shows analgesic effects on mammals. The protein is TauPI-stichotoxin-Hcr2c of Radianthus crispa (Leathery sea anemone).